Consider the following 77-residue polypeptide: Subtilisin-chymotrypsin inhibitor CI-1C (77 aa).

This sequence belongs to the protease inhibitor I13 (potato type I serine protease inhibitor) family.

Its function is as follows. Inhibits both subtilisin and chymotrypsin. The chain is Subtilisin-chymotrypsin inhibitor CI-1C from Hordeum vulgare (Barley).